We begin with the raw amino-acid sequence, 418 residues long: Tyrosine--tRNA ligase (418 aa).

Residue Tyr-34 coordinates L-tyrosine. Residues 39–48 carry the 'HIGH' region motif; sequence PTADSLHLGH. 2 residues coordinate L-tyrosine: Tyr-169 and Gln-173. Positions 229–233 match the 'KMSKS' region motif; sequence KFGKS. Lys-232 lines the ATP pocket. Residues 352–418 form the S4 RNA-binding domain; the sequence is LNIVEILVSS…GKKKYAVLTY (67 aa).

Belongs to the class-I aminoacyl-tRNA synthetase family. TyrS type 1 subfamily. As to quaternary structure, homodimer.

The protein resides in the cytoplasm. The enzyme catalyses tRNA(Tyr) + L-tyrosine + ATP = L-tyrosyl-tRNA(Tyr) + AMP + diphosphate + H(+). Functionally, catalyzes the attachment of tyrosine to tRNA(Tyr) in a two-step reaction: tyrosine is first activated by ATP to form Tyr-AMP and then transferred to the acceptor end of tRNA(Tyr). This is Tyrosine--tRNA ligase from Streptococcus uberis (strain ATCC BAA-854 / 0140J).